Here is a 900-residue protein sequence, read N- to C-terminus: Phosphoenolpyruvate carboxylase (900 aa).

Catalysis depends on residues His-140 and Lys-568.

This sequence belongs to the PEPCase type 1 family. Mg(2+) is required as a cofactor.

It catalyses the reaction oxaloacetate + phosphate = phosphoenolpyruvate + hydrogencarbonate. In terms of biological role, forms oxaloacetate, a four-carbon dicarboxylic acid source for the tricarboxylic acid cycle. This is Phosphoenolpyruvate carboxylase from Neisseria gonorrhoeae (strain ATCC 700825 / FA 1090).